The sequence spans 478 residues: Odorant receptor coreceptor (478 aa).

Over 1 to 43 (MNVQPTKYHGLVLDLMPNIRLMQGFGHFLFRYVNGPVLIRKLY) the chain is Cytoplasmic. Residues 44–64 (SWWNLIMILLQYFAIMGNLVM) traverse the membrane as a helical segment. Topologically, residues 65 to 73 (NTGDVNELT) are extracellular. The chain crosses the membrane as a helical span at residues 74–94 (ANTITTLFFTHSVTKFIYVAV). Residues 95–133 (NSEHFYRTLGIWNQPNSHSLFAESDARYHSIALAKMRKL) lie on the Cytoplasmic side of the membrane. Residues 134–154 (LVMVMVTTVLSVVAWITITFF) traverse the membrane as a helical segment. Over 155 to 187 (GDSVKNVFDKETNETYTVEIPRLPIKAWYPWDA) the chain is Extracellular. Residue asparagine 167 is glycosylated (N-linked (GlcNAc...) asparagine). Residues 188–208 (MSGVPYFFSFIYQAYFLLFSM) traverse the membrane as a helical segment. The Cytoplasmic segment spans residues 209-343 (CQANLADVMF…VERHKHVVRL (135 aa)). The helical transmembrane segment at 344–364 (VSAIGETYGAALLLHMLTSTI) threads the bilayer. At 365-382 (KLTLLAYQATKIDALNVY) the chain is on the extracellular side. A helical transmembrane segment spans residues 383–403 (GLTVIGYLVYALAQVFLFCIF). Residues 404–454 (GNRLIEESSSVMEAAYSCHWYDGSEEAKTFVQIVCQQCQKAMTISGAKFFT) are Cytoplasmic-facing. A helical transmembrane segment spans residues 455–475 (VSLDLFASVLGAVVTYFMVLV). Over 476 to 478 (QLK) the chain is Extracellular.

Belongs to the insect chemoreceptor superfamily. Heteromeric odorant receptor channel (TC 1.A.69) family. Orco subfamily. In terms of assembly, heterodimer with conventional odorant receptors (ORs). Complexes exist early in the endomembrane system in olfactory sensory neurons (OSNs), coupling these complexes to the conserved ciliary trafficking pathway. In terms of tissue distribution, found specifically within most antennal and maxillary palp sensilla, as well as in a subset of proboscis sensilla.

The protein resides in the cell membrane. Its function is as follows. Odorant coreceptor which complexes with conventional odorant receptors (ORs) to form odorant-sensing units, providing sensitive and prolonged odorant signaling and calcium permeability. Orco is a universal and integral part of the functional odorant receptor, involved in the dendritic localization of other olfactory receptors. Plays a key role in preferred attraction of females for humans over non-human hosts for blood feeding. Human attraction plays a crucial role in the transmission of dengue and yellow fever by the mosquito. Also required for the response to the insect repellent IR3535; or to N,N-Diethyl-meta-toluamide (DEET), the most widely used insect repellent worldwide. This chain is Odorant receptor coreceptor (SGPRor7), found in Aedes aegypti (Yellowfever mosquito).